Reading from the N-terminus, the 313-residue chain is Ribosomal RNA small subunit methyltransferase H (313 aa).

Residues 33 to 35 (GGH), Asp53, Phe80, Asp102, and Gln109 each bind S-adenosyl-L-methionine. Positions 291 to 313 (SDEEMRANPRAQSAKLRAAEKIR) are disordered.

It belongs to the methyltransferase superfamily. RsmH family.

Its subcellular location is the cytoplasm. It catalyses the reaction cytidine(1402) in 16S rRNA + S-adenosyl-L-methionine = N(4)-methylcytidine(1402) in 16S rRNA + S-adenosyl-L-homocysteine + H(+). In terms of biological role, specifically methylates the N4 position of cytidine in position 1402 (C1402) of 16S rRNA. This Heliobacterium modesticaldum (strain ATCC 51547 / Ice1) protein is Ribosomal RNA small subunit methyltransferase H.